Consider the following 410-residue polypeptide: Cytochrome P450 monooxygenase mpsF (410 aa).

Position 355 (cysteine 355) interacts with heme.

It belongs to the cytochrome P450 family. Heme serves as cofactor.

The protein operates within secondary metabolite biosynthesis. In terms of biological role, cytochrome P450 monooxygenase; part of the gene cluster that mediates the biosynthesis of macrophasetins, 3-decalinoyltetramic acids (DTAs) which feature a tetramate (pyrrolidine-2,4-dione) unit connected to a decalin fragment and that have potent bioactivities. The PKS-NRPS mpsA together with its associated enoylreductase partner mpsG incorporate one unit of acetyl-CoA, seven units of malonyl-CoA, and one unit of L-alanine to assemble the linear tetramic acid intermediate corresponding to the backbone of macrophasetins. Without the Diels-Alderase mpsD, the mpsA/G product can undergo the non-enzymatic intramolecular Diels-Alder (IMDA) reaction to generate both macrophasetin A and macrophasetin B. Catalyzed by mpsD, the linear tetramic acid intermediate is thoroughly converted to macrophasetin A via the endo-IMDA reaction in a regioselective and stereoselective manner. Finally, the cytochrome P450 monooxygenase mpsF catalyzes the hydroxylation at C20 to yield the end product macrophasetin C. The polypeptide is Cytochrome P450 monooxygenase mpsF (Macrophomina phaseolina (strain MS6) (Charcoal rot fungus)).